We begin with the raw amino-acid sequence, 189 residues long: Protein GrpE (189 aa).

Residues 1 to 38 (MTKSNETERMEESEETHSSDIRSASESDHASGSDHTES) show a composition bias toward basic and acidic residues. A disordered region spans residues 1-54 (MTKSNETERMEESEETHSSDIRSASESDHASGSDHTESADEIPTADAEQGELEQ).

The protein belongs to the GrpE family. In terms of assembly, homodimer.

It is found in the cytoplasm. Functionally, participates actively in the response to hyperosmotic and heat shock by preventing the aggregation of stress-denatured proteins, in association with DnaK and GrpE. It is the nucleotide exchange factor for DnaK and may function as a thermosensor. Unfolded proteins bind initially to DnaJ; upon interaction with the DnaJ-bound protein, DnaK hydrolyzes its bound ATP, resulting in the formation of a stable complex. GrpE releases ADP from DnaK; ATP binding to DnaK triggers the release of the substrate protein, thus completing the reaction cycle. Several rounds of ATP-dependent interactions between DnaJ, DnaK and GrpE are required for fully efficient folding. This Tropheryma whipplei (strain TW08/27) (Whipple's bacillus) protein is Protein GrpE.